The sequence spans 75 residues: DNA-directed RNA polymerase subunit omega (75 aa).

Belongs to the RNA polymerase subunit omega family. In terms of assembly, in cyanobacteria the RNAP catalytic core is composed of 2 alpha, 1 beta, 1 beta', 1 gamma and 1 omega subunit. When a sigma factor is associated with the core the holoenzyme is formed, which can initiate transcription.

The enzyme catalyses RNA(n) + a ribonucleoside 5'-triphosphate = RNA(n+1) + diphosphate. Its function is as follows. Promotes RNA polymerase assembly. Latches the N- and C-terminal regions of the beta' subunit thereby facilitating its interaction with the beta and alpha subunits. In Gloeothece citriformis (strain PCC 7424) (Cyanothece sp. (strain PCC 7424)), this protein is DNA-directed RNA polymerase subunit omega.